A 586-amino-acid chain; its full sequence is Arginine--tRNA ligase (586 aa).

The short motif at 128–138 (ANPTGPLHVGH) is the 'HIGH' region element.

Belongs to the class-I aminoacyl-tRNA synthetase family. Monomer.

The protein localises to the cytoplasm. The catalysed reaction is tRNA(Arg) + L-arginine + ATP = L-arginyl-tRNA(Arg) + AMP + diphosphate. This is Arginine--tRNA ligase from Coxiella burnetii (strain RSA 331 / Henzerling II).